A 557-amino-acid polypeptide reads, in one-letter code: Probable tRNA-splicing endonuclease subunit tsp-5 (557 aa).

Disordered regions lie at residues 1 to 36, 131 to 152, 225 to 252, 370 to 403, and 514 to 557; these read MPLD…MMDE, KLTK…DRKL, SVPA…EDDD, PSST…SDSP, and SGGP…GRGN. Residues 131-140 are compositionally biased toward basic and acidic residues; the sequence is KLTKRGKEGA. Residues 370-381 show a composition bias toward low complexity; the sequence is PSSTSSSASPTA. Composition is skewed to gly residues over residues 517 to 527 and 538 to 549; these read PRRGGGGGGKK and GRGGGRGGGRGG.

It belongs to the SEN54 family. As to quaternary structure, tRNA splicing endonuclease is a heterotetramer composed of tsp-2/sen2, tsp-1/sen15, tsp-4/sen34 and tsp-5/sen54. Interacts directly with tsp-2/sen2.

Non-catalytic subunit of the tRNA-splicing endonuclease complex, a complex responsible for identification and cleavage of the splice sites in pre-tRNA. It cleaves pre-tRNA at the 5' and 3' splice sites to release the intron. The products are an intron and two tRNA half-molecules bearing 2',3' cyclic phosphate and 5'-OH termini. There are no conserved sequences at the splice sites, but the intron is invariably located at the same site in the gene, placing the splice sites an invariant distance from the constant structural features of the tRNA body. May be required to embody the molecular ruler of the complex. The sequence is that of Probable tRNA-splicing endonuclease subunit tsp-5 (tsp-5) from Neurospora crassa (strain ATCC 24698 / 74-OR23-1A / CBS 708.71 / DSM 1257 / FGSC 987).